A 121-amino-acid polypeptide reads, in one-letter code: Large ribosomal subunit protein uL22 (121 aa).

It belongs to the universal ribosomal protein uL22 family. As to quaternary structure, part of the 50S ribosomal subunit.

This protein binds specifically to 23S rRNA; its binding is stimulated by other ribosomal proteins, e.g. L4, L17, and L20. It is important during the early stages of 50S assembly. It makes multiple contacts with different domains of the 23S rRNA in the assembled 50S subunit and ribosome. Functionally, the globular domain of the protein is located near the polypeptide exit tunnel on the outside of the subunit, while an extended beta-hairpin is found that lines the wall of the exit tunnel in the center of the 70S ribosome. This Paenarthrobacter aurescens (strain TC1) protein is Large ribosomal subunit protein uL22.